Reading from the N-terminus, the 155-residue chain is Small ribosomal subunit protein bS16 (155 aa).

Residues 113–155 form a disordered region; the sequence is ADGAPTGEAIQQKKKKAPKKAEAAEAEAPAEEPAAESADAASE. Positions 136–146 are enriched in acidic residues; it reads AEAEAPAEEPA.

This sequence belongs to the bacterial ribosomal protein bS16 family.

The chain is Small ribosomal subunit protein bS16 from Mycobacteroides abscessus (strain ATCC 19977 / DSM 44196 / CCUG 20993 / CIP 104536 / JCM 13569 / NCTC 13031 / TMC 1543 / L948) (Mycobacterium abscessus).